Reading from the N-terminus, the 698-residue chain is Serotransferrin (698 aa).

The signal sequence occupies residues 1-19; that stretch reads MRLAVGALLVCAVLGLCLA. 2 Transferrin-like domains span residues 25 to 347 and 361 to 683; these read VRWC…NLRE and VKWC…NLRK. Cystine bridges form between Cys-28–Cys-67 and Cys-38–Cys-58. At Arg-42 the chain carries Dimethylated arginine. Ser-51 is a glycosylation site (O-linked (GalNAc...) serine). 2 residues coordinate Fe(3+): Asp-82 and Tyr-114. 17 disulfide bridges follow: Cys-137–Cys-213, Cys-156–Cys-350, Cys-177–Cys-193, Cys-180–Cys-198, Cys-190–Cys-196, Cys-246–Cys-260, Cys-358–Cys-615, Cys-364–Cys-396, Cys-374–Cys-387, Cys-421–Cys-693, Cys-437–Cys-656, Cys-469–Cys-542, Cys-493–Cys-684, Cys-503–Cys-517, Cys-514–Cys-525, Cys-582–Cys-596, and Cys-634–Cys-639. Residues Thr-139, Arg-143, Ala-145, and Gly-146 each coordinate hydrogencarbonate. Tyr-207 lines the Fe(3+) pocket. A Fe(3+)-binding site is contributed by His-268. A Phosphoserine; by FAM20C modification is found at Ser-389. Asp-411 is a binding site for Fe(3+). An N-linked (GlcNAc...) (complex) asparagine glycan is attached at Asn-432. Tyr-445 serves as a coordination point for Fe(3+). Residues Thr-471, Arg-475, Ala-477, and Gly-478 each contribute to the hydrogencarbonate site. A glycan (N-linked (GlcNAc...) asparagine; atypical; partial) is linked at Asn-491. Tyr-536 contacts Fe(3+). His-604 is a Fe(3+) binding site. An N-linked (GlcNAc...) (complex) asparagine glycan is attached at Asn-630. Ser-685 carries the post-translational modification Phosphoserine; by FAM20C.

This sequence belongs to the transferrin family. Monomer. Part of a complex composed of SLC40A1/ferroportin, TF/transferrin and HEPH/hephaestin that transfers iron from cells to transferrin. In terms of assembly, (Microbial infection) Binds to Neisseria transferrin-binding protein A (tbpA or tbp1). Forms a large complex with TbpA and TbpB. As to quaternary structure, (Microbial infection) Binds to Neisseria transferrin-binding protein B (tbpb or tbp2). Expressed by the liver and secreted in plasma.

The protein localises to the secreted. Functionally, transferrins are iron binding transport proteins which can bind two Fe(3+) ions in association with the binding of an anion, usually bicarbonate. It is responsible for the transport of iron from sites of absorption and heme degradation to those of storage and utilization. Serum transferrin may also have a further role in stimulating cell proliferation. (Microbial infection) Serves as an iron source for Neisseria species, which capture the protein and extract its iron for their own use. Its function is as follows. (Microbial infection) Serves as an iron source for parasite T.brucei (strain 427), which capture TF via its own transferrin receptor ESAG6:ESAG7 and extract its iron for its own use. In Homo sapiens (Human), this protein is Serotransferrin.